The following is a 74-amino-acid chain: RNA-binding protein Hfq (74 aa).

The Sm domain occupies 9–69; sequence DQFLNQLRKE…ISTFAPQKNV (61 aa).

The protein belongs to the Hfq family. As to quaternary structure, homohexamer.

RNA chaperone that binds small regulatory RNA (sRNAs) and mRNAs to facilitate mRNA translational regulation in response to envelope stress, environmental stress and changes in metabolite concentrations. Also binds with high specificity to tRNAs. The sequence is that of RNA-binding protein Hfq from Anoxybacillus flavithermus (strain DSM 21510 / WK1).